Consider the following 409-residue polypeptide: uncharacterized protein (409 aa).

Helical transmembrane passes span 3–23, 43–63, 73–93, 95–115, 135–155, 162–182, 209–229, 248–268, 283–303, 309–329, 346–366, and 379–399; these read IIVKIPVWMLLSLFILSPTTE, ITQITSTLYFLGFAVGILSLG, PIVLLGLFIYIVSSIISIFSV, IEMLMIARFIQAFGVSVGSVI, ILSPWLLFIPSLGSYIGGYII, YVFVFFSLIGTILLALYYKIL, ILWLYAFIIGAFNGIYYGFFI, KLAFLLSFSAIFGGFLGGYLI, FIFSLCGCILFVVNAFILEFI, LAISMIFVPMMIHIIGHSLLI, TAGSIFGAIYYIVIAAVTYCV, and LLCLVSSISSVISFYYICILY.

This sequence belongs to the major facilitator superfamily. Bcr/CmlA family.

The protein localises to the cell inner membrane. This is an uncharacterized protein from Rickettsia typhi (strain ATCC VR-144 / Wilmington).